The following is a 285-amino-acid chain: Tryptophan synthase alpha chain (285 aa).

Catalysis depends on proton acceptor residues Glu53 and Asp64.

This sequence belongs to the TrpA family. Tetramer of two alpha and two beta chains.

The enzyme catalyses (1S,2R)-1-C-(indol-3-yl)glycerol 3-phosphate + L-serine = D-glyceraldehyde 3-phosphate + L-tryptophan + H2O. The protein operates within amino-acid biosynthesis; L-tryptophan biosynthesis; L-tryptophan from chorismate: step 5/5. The alpha subunit is responsible for the aldol cleavage of indoleglycerol phosphate to indole and glyceraldehyde 3-phosphate. This Bordetella pertussis (strain Tohama I / ATCC BAA-589 / NCTC 13251) protein is Tryptophan synthase alpha chain.